The primary structure comprises 227 residues: Cytochrome c oxidase subunit 2 (227 aa).

The Mitochondrial intermembrane segment spans residues 1 to 14 (MAYPFELGFQDATS). A helical membrane pass occupies residues 15 to 45 (PIMEELLHFHDHTLMIVFLISSLVLYIISLM). Residues 46-59 (LTTKLTHTSTMDAQ) are Mitochondrial matrix-facing. The chain crosses the membrane as a helical span at residues 60–87 (EIETIWTILPAIILILIALPSLRILYMM). Residues 88 to 227 (DEINDPSLTV…HFENWSSSML (140 aa)) lie on the Mitochondrial intermembrane side of the membrane. Cu cation contacts are provided by His161, Cys196, Glu198, Cys200, His204, and Met207. Residue Glu198 participates in Mg(2+) binding.

It belongs to the cytochrome c oxidase subunit 2 family. Component of the cytochrome c oxidase (complex IV, CIV), a multisubunit enzyme composed of 14 subunits. The complex is composed of a catalytic core of 3 subunits MT-CO1, MT-CO2 and MT-CO3, encoded in the mitochondrial DNA, and 11 supernumerary subunits COX4I, COX5A, COX5B, COX6A, COX6B, COX6C, COX7A, COX7B, COX7C, COX8 and NDUFA4, which are encoded in the nuclear genome. The complex exists as a monomer or a dimer and forms supercomplexes (SCs) in the inner mitochondrial membrane with NADH-ubiquinone oxidoreductase (complex I, CI) and ubiquinol-cytochrome c oxidoreductase (cytochrome b-c1 complex, complex III, CIII), resulting in different assemblies (supercomplex SCI(1)III(2)IV(1) and megacomplex MCI(2)III(2)IV(2)). Found in a complex with TMEM177, COA6, COX18, COX20, SCO1 and SCO2. Interacts with TMEM177 in a COX20-dependent manner. Interacts with COX20. Interacts with COX16. Cu cation is required as a cofactor.

The protein localises to the mitochondrion inner membrane. It catalyses the reaction 4 Fe(II)-[cytochrome c] + O2 + 8 H(+)(in) = 4 Fe(III)-[cytochrome c] + 2 H2O + 4 H(+)(out). Its function is as follows. Component of the cytochrome c oxidase, the last enzyme in the mitochondrial electron transport chain which drives oxidative phosphorylation. The respiratory chain contains 3 multisubunit complexes succinate dehydrogenase (complex II, CII), ubiquinol-cytochrome c oxidoreductase (cytochrome b-c1 complex, complex III, CIII) and cytochrome c oxidase (complex IV, CIV), that cooperate to transfer electrons derived from NADH and succinate to molecular oxygen, creating an electrochemical gradient over the inner membrane that drives transmembrane transport and the ATP synthase. Cytochrome c oxidase is the component of the respiratory chain that catalyzes the reduction of oxygen to water. Electrons originating from reduced cytochrome c in the intermembrane space (IMS) are transferred via the dinuclear copper A center (CU(A)) of subunit 2 and heme A of subunit 1 to the active site in subunit 1, a binuclear center (BNC) formed by heme A3 and copper B (CU(B)). The BNC reduces molecular oxygen to 2 water molecules using 4 electrons from cytochrome c in the IMS and 4 protons from the mitochondrial matrix. This Tamias townsendii (Townsend's chipmunk) protein is Cytochrome c oxidase subunit 2 (MT-CO2).